The primary structure comprises 820 residues: Probable beta-glucosidase ARB_05654 (820 aa).

Positions methionine 1–alanine 18 are cleaved as a signal peptide. N-linked (GlcNAc...) asparagine glycans are attached at residues asparagine 62 and asparagine 276. Residue aspartate 304 is part of the active site. N-linked (GlcNAc...) asparagine glycans are attached at residues asparagine 339, asparagine 346, asparagine 465, asparagine 547, asparagine 566, asparagine 588, and asparagine 811.

The protein belongs to the glycosyl hydrolase 3 family.

Its subcellular location is the secreted. The catalysed reaction is Hydrolysis of terminal, non-reducing beta-D-glucosyl residues with release of beta-D-glucose.. Its pathway is glycan metabolism; cellulose degradation. In terms of biological role, beta-glucosidases are one of a number of cellulolytic enzymes involved in the degradation of cellulosic biomass. Catalyzes the last step releasing glucose from the inhibitory cellobiose. This is Probable beta-glucosidase ARB_05654 from Arthroderma benhamiae (strain ATCC MYA-4681 / CBS 112371) (Trichophyton mentagrophytes).